The chain runs to 320 residues: Glutathione synthetase (320 aa).

The ATP-grasp domain maps to 130-315 (KIFTSWFPDL…ITGMLLDYIE (186 aa)). 156-212 (WEKYQDIIIKPLDAMGGANIFRIKKNDPNFSVIVENMTNYERKYCMVQNYLPEIKLG) contributes to the ATP binding site. Mg(2+)-binding residues include glutamate 286 and asparagine 288.

Belongs to the prokaryotic GSH synthase family. Mg(2+) is required as a cofactor. Requires Mn(2+) as cofactor.

The enzyme catalyses gamma-L-glutamyl-L-cysteine + glycine + ATP = glutathione + ADP + phosphate + H(+). Its pathway is sulfur metabolism; glutathione biosynthesis; glutathione from L-cysteine and L-glutamate: step 2/2. This is Glutathione synthetase from Buchnera aphidicola subsp. Acyrthosiphon pisum (strain APS) (Acyrthosiphon pisum symbiotic bacterium).